The following is a 523-amino-acid chain: Cyclin-dependent kinase 17 (523 aa).

Ser-9 is subject to Phosphoserine. Residues 31–55 (IEESSSKDNEPIVKNGRPPTSHSMH) form a disordered region. 3 positions are modified to phosphoserine: Ser-80, Ser-92, and Ser-105. The tract at residues 103 to 123 (MGSDGESDQASGTSSDEVQSP) is disordered. Residues 110-123 (DQASGTSSDEVQSP) show a composition bias toward polar residues. A phosphoserine mark is found at Ser-137, Ser-146, Ser-165, and Ser-180. Positions 192–473 (YIKLEKLGEG…AEEAMKHVYF (282 aa)) constitute a Protein kinase domain. ATP contacts are provided by residues 198-206 (LGEGTYATV) and Lys-221. Asp-313 acts as the Proton acceptor in catalysis.

It belongs to the protein kinase superfamily. CMGC Ser/Thr protein kinase family. CDC2/CDKX subfamily. In terms of assembly, found in a complex containing CABLES1, CDK16 and TDRD7. Interacts with TDRD7. As to expression, brain specific. Within the brain it is concentrated in the neuronal layers of the hippocampus and olfactory bulb, which mostly consist of post-mitotic neurons.

It catalyses the reaction L-seryl-[protein] + ATP = O-phospho-L-seryl-[protein] + ADP + H(+). It carries out the reaction L-threonyl-[protein] + ATP = O-phospho-L-threonyl-[protein] + ADP + H(+). Functionally, may play a role in terminally differentiated neurons. Has a Ser/Thr-phosphorylating activity for histone H1. The polypeptide is Cyclin-dependent kinase 17 (Cdk17) (Rattus norvegicus (Rat)).